Here is a 514-residue protein sequence, read N- to C-terminus: DNA-(apurinic or apyrimidinic site) endonuclease 2 (514 aa).

Residues Asn-8 and Glu-48 each contribute to the Mg(2+) site. Tyr-156 is a catalytic residue. Positions 197, 199, 303, and 304 each coordinate Mg(2+). The active-site Proton donor/acceptor is Asp-197. Residue His-304 is the Proton acceptor of the active site. Residues 359–417 (PSNQTQVHMRKNKARVRSTRSRPSKTGSSRGQKNLMSYFQPSSSGPQTSNLDLPSLGTL) form a disordered region. Positions 366–381 (HMRKNKARVRSTRSRP) are enriched in basic residues. Lys-371 participates in a covalent cross-link: Glycyl lysine isopeptide (Lys-Gly) (interchain with G-Cter in ubiquitin). Over residues 382–410 (SKTGSSRGQKNLMSYFQPSSSGPQTSNLD) the composition is skewed to polar residues. The required for the interaction and colocalization with PCNA in nuclear foci in presence of oxidative-induced DNA damaging agents stretch occupies residues 390 to 397 (QKNLMSYF). Zn(2+)-binding residues include Cys-465, His-468, Cys-491, and Cys-505. The GRF-type zinc finger occupies 465–514 (CGGHREPCVMRTVKKPGPNLGRHFYMCARPQGPPTDPSSRCNFFLWSRPS).

It belongs to the DNA repair enzymes AP/ExoA family. In terms of assembly, interacts with PCNA; this interaction is triggered by reactive oxygen species and increased by misincorporation of uracil in nuclear DNA. Mg(2+) serves as cofactor. Requires Mn(2+) as cofactor. Ubiquitinated by the CUL9-RBX1 complex. Ubiquitinated by MKRN3 at Lys-371 leading to proteasomal degradation.

It is found in the nucleus. The protein localises to the cytoplasm. The protein resides in the mitochondrion. The catalysed reaction is Exonucleolytic cleavage in the 3'- to 5'-direction to yield nucleoside 5'-phosphates.. 3'-5' exonuclease activity is activated by sodium and manganese. 3'-5' exonuclease and 3'-phosphodiesterase activities are stimulated in presence of PCNA. Functions as a weak apurinic/apyrimidinic (AP) endodeoxyribonuclease in the DNA base excision repair (BER) pathway of DNA lesions induced by oxidative and alkylating agents. Initiates repair of AP sites in DNA by catalyzing hydrolytic incision of the phosphodiester backbone immediately adjacent to the damage, generating a single-strand break with 5'-deoxyribose phosphate and 3'-hydroxyl ends. Also displays double-stranded DNA 3'-5' exonuclease, 3'-phosphodiesterase activities. Shows robust 3'-5' exonuclease activity on 3'-recessed heteroduplex DNA and is able to remove mismatched nucleotides preferentially. Shows fairly strong 3'-phosphodiesterase activity involved in the removal of 3'-damaged termini formed in DNA by oxidative agents. In the nucleus functions in the PCNA-dependent BER pathway. Plays a role in reversing blocked 3' DNA ends, problematic lesions that preclude DNA synthesis. Required for somatic hypermutation (SHM) and DNA cleavage step of class switch recombination (CSR) of immunoglobulin genes. Required for proper cell cycle progression during proliferation of peripheral lymphocytes. The polypeptide is DNA-(apurinic or apyrimidinic site) endonuclease 2 (APEX2) (Bos taurus (Bovine)).